We begin with the raw amino-acid sequence, 621 residues long: Leucine aminopeptidase (621 aa).

Positions 1 to 73 (MPLLRSSQHI…ISNRKEFRKM (73 aa)) are excised as a propeptide. The disordered stretch occupies residues 129-152 (SSSGGSGGNGGSAGSSGNGEGGAQ). Over residues 132-150 (GGSGGNGGSAGSSGNGEGG) the composition is skewed to gly residues. A peptide is bound by residues lysine 390, aspartate 395, and lysine 402. Zn(2+) contacts are provided by lysine 390 and aspartate 395. The interval 400–417 (NLKAAPGSMIDLMKFDMS) is L13 loop. Residue lysine 402 is part of the active site. Residues aspartate 410, methionine 412, aspartate 415, aspartate 475, and glutamate 477 each coordinate Zn(2+). Aspartate 415 and aspartate 475 together coordinate a peptide. The active site involves arginine 479.

This sequence belongs to the peptidase M17 family. As to quaternary structure, homohexamer composed of dimer of trimers. Both the identity and concentration of metal ions available dictate the extent to which oligomerization occurs; Mn(2+) and Co(2+) induces oligomerization, whereas Mg(2+) has no effect, and Zn(2+) causes irreversible protein aggregation in vitro. Zn(2+) is required as a cofactor.

Its subcellular location is the cytoplasm. The catalysed reaction is Release of an N-terminal amino acid, Xaa-|-Yaa-, in which Xaa is preferably Leu, but may be other amino acids including Pro although not Arg or Lys, and Yaa may be Pro. Amino acid amides and methyl esters are also readily hydrolyzed, but rates on arylamides are exceedingly low.. It catalyses the reaction L-cysteinylglycine + H2O = L-cysteine + glycine. Oligomerization is required for catalytic activity and is metal-dependent. The type of metal that binds the 2 metal binding sites influences catalytic activity and substrate specificity. In vitro, activated by Co(2+), Mn(2+), Ni(2+), Mg(2+) and Zn(2+) with decreasing strength. Occupancy of the site 2 is essential and sufficient for activating the enzyme but occupation of the 2 sites is necessary for full catalytic activity. Inhibited by Ca(2+). Inhibited by fungal metabolite bestatin. Functionally, aminopeptidase which preferentially cleaves leucine residues from the N-terminus of peptides. Also, has some activity towards tryptophan and methionine and has very low activity towards alanine, arginine, asparagine, phenylalanine and tyrosine. No activity towards histidine, serine, valine, isoleucine, glycine, aspartic acid and glutamic acid. In addition, cleaves the Cys-Gly dipeptide, probably as part of the glutathione regulation pathway; cleavage only occurs in the presence of Mn(2+). Plays a role in the final step of host hemoglobin catabolism, by cleaving hemoglobin-derived oligopeptides providing a source of amino acids for the parasite protein synthesis and for the maintenance of osmotic homeostasis. This Plasmodium vivax (strain Salvador I) protein is Leucine aminopeptidase.